The following is a 495-amino-acid chain: GTPase Der (495 aa).

2 EngA-type G domains span residues 3-166 (PVIA…MDAE) and 208-381 (IKLA…DCST). GTP-binding positions include 9–16 (GRPNVGKS), 56–60 (DTGGI), 118–121 (NKTD), 214–221 (GRPNVGKS), 261–265 (DTAGV), and 326–329 (NKWD). Positions 382-466 (KRVGTSLLTR…PIRIQFKEGE (85 aa)) constitute a KH-like domain.

Belongs to the TRAFAC class TrmE-Era-EngA-EngB-Septin-like GTPase superfamily. EngA (Der) GTPase family. As to quaternary structure, associates with the 50S ribosomal subunit.

GTPase that plays an essential role in the late steps of ribosome biogenesis. This Yersinia pseudotuberculosis serotype O:3 (strain YPIII) protein is GTPase Der.